Here is a 202-residue protein sequence, read N- to C-terminus: 3-isopropylmalate dehydratase small subunit (202 aa).

Belongs to the LeuD family. LeuD type 1 subfamily. In terms of assembly, heterodimer of LeuC and LeuD.

The enzyme catalyses (2R,3S)-3-isopropylmalate = (2S)-2-isopropylmalate. Its pathway is amino-acid biosynthesis; L-leucine biosynthesis; L-leucine from 3-methyl-2-oxobutanoate: step 2/4. Catalyzes the isomerization between 2-isopropylmalate and 3-isopropylmalate, via the formation of 2-isopropylmaleate. The protein is 3-isopropylmalate dehydratase small subunit of Rhizobium rhizogenes (strain K84 / ATCC BAA-868) (Agrobacterium radiobacter).